The sequence spans 155 residues: Transcriptional repressor NrdR (155 aa).

A zinc finger lies at 3–34 (CPFCGNVDTQVKDSRPAEDHVAIRRRRFCPAC). The ATP-cone domain occupies 49–139 (LVVIKSSGKR…VYKNFQAADD (91 aa)).

The protein belongs to the NrdR family. Zn(2+) serves as cofactor.

Its function is as follows. Negatively regulates transcription of bacterial ribonucleotide reductase nrd genes and operons by binding to NrdR-boxes. This Dinoroseobacter shibae (strain DSM 16493 / NCIMB 14021 / DFL 12) protein is Transcriptional repressor NrdR.